A 433-amino-acid polypeptide reads, in one-letter code: Apolipoprotein B (433 aa).

N-linked (GlcNAc...) asparagine glycosylation occurs at N158.

It is found in the cytoplasm. The protein resides in the secreted. The protein localises to the lipid droplet. Apolipoprotein B is a major protein constituent of chylomicrons, VLDL and LDL. It functions as a recognition signal for the cellular binding and internalization of LDL particles by the apoB/E receptor. The protein is Apolipoprotein B (APOB) of Gallus gallus (Chicken).